Consider the following 563-residue polypeptide: Probable ganciclovir kinase (563 aa).

Residues 1–16 (MDNGVETPQGQKTQPI) are compositionally biased toward polar residues. The disordered stretch occupies residues 1–33 (MDNGVETPQGQKTQPINLPPDRKRLRKHDGLGK). Residues 202 to 210 (LGVGAYGKV) and lysine 219 contribute to the ATP site. Aspartate 314 acts as the Proton acceptor in catalysis.

This sequence belongs to the protein kinase superfamily. Tyr protein kinase family. HCMV ganciclovir subfamily.

In terms of biological role, phosphorylates the antiviral nucleoside analog ganciclovir. This is Probable ganciclovir kinase (U69) from Human herpesvirus 6B (strain Z29) (HHV-6 variant B).